The chain runs to 389 residues: Phospho-N-acetylmuramoyl-pentapeptide-transferase (389 aa).

Helical transmembrane passes span 21 to 41 (FITFRAVFATLTALVIGLVTG), 70 to 90 (GTPTMGGVLILVSIGISTLLW), 97 to 117 (FIWVVLIVTLGFGAVGWVDDY), 134 to 154 (YMWQSIIGLFAAIYLAFSVSA), 189 to 209 (TISYPLGVWGFIALTYFVIVG), 222 to 242 (GLAIMPTVMVGTALGLFAYLT), 259 to 279 (AGELIIFCGAMAGAGLAFLWF), 286 to 306 (VFMGDVGALALGGALGTIAVI), 311 to 331 (VVLFIMGGIFVVETLSVMLQV), and 366 to 386 (QVVVRFWIITMMLVLFGLSTL).

It belongs to the glycosyltransferase 4 family. MraY subfamily. The cofactor is Mg(2+).

It localises to the cell inner membrane. The enzyme catalyses UDP-N-acetyl-alpha-D-muramoyl-L-alanyl-gamma-D-glutamyl-meso-2,6-diaminopimeloyl-D-alanyl-D-alanine + di-trans,octa-cis-undecaprenyl phosphate = di-trans,octa-cis-undecaprenyl diphospho-N-acetyl-alpha-D-muramoyl-L-alanyl-D-glutamyl-meso-2,6-diaminopimeloyl-D-alanyl-D-alanine + UMP. Its pathway is cell wall biogenesis; peptidoglycan biosynthesis. Catalyzes the initial step of the lipid cycle reactions in the biosynthesis of the cell wall peptidoglycan: transfers peptidoglycan precursor phospho-MurNAc-pentapeptide from UDP-MurNAc-pentapeptide onto the lipid carrier undecaprenyl phosphate, yielding undecaprenyl-pyrophosphoryl-MurNAc-pentapeptide, known as lipid I. The sequence is that of Phospho-N-acetylmuramoyl-pentapeptide-transferase from Janthinobacterium sp. (strain Marseille) (Minibacterium massiliensis).